The following is a 412-amino-acid chain: Peptidyl-prolyl cis-trans isomerase FKBP8 (412 aa).

The tract at residues Met-1–Gln-68 is disordered. Over residues Glu-22–Ser-50 the composition is skewed to acidic residues. A PPIase FKBP-type domain is found at Gly-120–Val-204. Positions 149 and 151 each coordinate Ca(2+). A TPR 1 repeat occupies Ala-221 to Ser-254. Glycyl lysine isopeptide (Lys-Gly) (interchain with G-Cter in ubiquitin) cross-links involve residues Lys-249, Lys-271, Lys-273, and Lys-284. 2 TPR repeats span residues Val-272–Asn-305 and Ile-306–Asn-339. Residue Ser-296 is modified to Phosphoserine. Glycyl lysine isopeptide (Lys-Gly) (interchain with G-Cter in ubiquitin) cross-links involve residues Lys-307, Lys-314, Lys-334, Lys-340, Lys-348, Lys-351, and Lys-352. The chain crosses the membrane as a helical span at residues Trp-390 to Ala-410.

As to quaternary structure, homomultimers or heteromultimers (Potential). Forms heterodimer with calmodulin. When activated by calmodulin and calcium, interacts with the BH4 domain of BCL2 and weakly with BCL2L1/BCLX isoform Bcl-X(L). Does not bind and inhibit calcineurin. Interacts with ZFYVE27; may negatively regulate ZFYVE27 phosphorylation. (Microbial infection) Interacts with hepatitis C/HCV protein NS5A. The cofactor is Ca(2+). Post-translationally, ubiquitinated by PRKN during mitophagy, leading to its degradation and enhancement of mitophagy. Deubiquitinated by USP30. As to expression, widely expressed. Highest levels seen in the brain. Highly abundant in the retina.

It localises to the mitochondrion. The protein localises to the mitochondrion membrane. The enzyme catalyses [protein]-peptidylproline (omega=180) = [protein]-peptidylproline (omega=0). Functionally, constitutively inactive PPiase, which becomes active when bound to calmodulin and calcium. Seems to act as a chaperone for BCL2, targets it to the mitochondria and modulates its phosphorylation state. The BCL2/FKBP8/calmodulin/calcium complex probably interferes with the binding of BCL2 to its targets. The active form of FKBP8 may therefore play a role in the regulation of apoptosis. Involved in the inhibition of viral infection by influenza A viruses (IAV). The chain is Peptidyl-prolyl cis-trans isomerase FKBP8 (FKBP8) from Homo sapiens (Human).